The primary structure comprises 79 residues: Conotoxin 1 (79 aa).

A signal peptide spans 1 to 22 (MKLTCVLIITVLFLTASQLITA). A propeptide spanning residues 23 to 46 (DYSRDQRQYRAVRLGDEMRTFKGA) is cleaved from the precursor. Intrachain disulfides connect cysteine 49–cysteine 62, cysteine 56–cysteine 67, and cysteine 61–cysteine 77.

It belongs to the conotoxin O1 superfamily. In terms of tissue distribution, expressed by the venom duct.

The protein localises to the secreted. The protein is Conotoxin 1 of Conus vexillum (Flag cone).